Here is a 432-residue protein sequence, read N- to C-terminus: MKFDVVIIGGGLAGLTCGIMLQQKGKCCAIINNGQSAMNFSSGSMDLLSQLPNGEKINSFEQGYDSLEEQLPNHPYCLFGKQHVLQKAKQFEQLIEKINLNVTGSYKQNHFRVTPLGGLHRTWLSADCIPTMDLHDEHFGYQKITVLGIEGYHDFQPHLLAENLIQHPQFTHCSITTALLHLPELDQLRLTSREFRSVNISQLLEHRLAFRELVQEIKQASGDGEAIFLPACFGLDNQDFFNKLTLETGLNLYELPTLPPSLVGLRQHKKLKTYFEKLGGFILNGDKALRAVIEDQQVKQIYTQLHQEHGIFAEHFVLASGSFFSNGLVSVFDRLLEPIFDVDMIGNSMIDIQNRLTWTARRFSSPQPYQSAGVAINSCCQLKKSGQIIKNLYAAGNVIGGYNALELGCGSGVAVVTALTVADNIIEAQNRV.

This sequence belongs to the anaerobic G-3-P dehydrogenase subunit B family. In terms of assembly, composed of a catalytic GlpA/B dimer and of membrane bound GlpC. It depends on FMN as a cofactor.

It catalyses the reaction a quinone + sn-glycerol 3-phosphate = dihydroxyacetone phosphate + a quinol. The protein operates within polyol metabolism; glycerol degradation via glycerol kinase pathway; glycerone phosphate from sn-glycerol 3-phosphate (anaerobic route): step 1/1. Its function is as follows. Conversion of glycerol 3-phosphate to dihydroxyacetone. Uses fumarate or nitrate as electron acceptor. The chain is Anaerobic glycerol-3-phosphate dehydrogenase subunit B from Histophilus somni (strain 129Pt) (Haemophilus somnus).